Consider the following 276-residue polypeptide: Diaminopimelate epimerase (276 aa).

Substrate contacts are provided by Asn-13, Gln-46, and Asn-66. Cys-75 functions as the Proton donor in the catalytic mechanism. Residues 76–77 (GN), Asn-159, Asn-192, and 210–211 (ER) each bind substrate. Catalysis depends on Cys-219, which acts as the Proton acceptor. 220-221 (GT) provides a ligand contact to substrate.

This sequence belongs to the diaminopimelate epimerase family. Homodimer.

The protein localises to the cytoplasm. The enzyme catalyses (2S,6S)-2,6-diaminopimelate = meso-2,6-diaminopimelate. Its pathway is amino-acid biosynthesis; L-lysine biosynthesis via DAP pathway; DL-2,6-diaminopimelate from LL-2,6-diaminopimelate: step 1/1. Functionally, catalyzes the stereoinversion of LL-2,6-diaminopimelate (L,L-DAP) to meso-diaminopimelate (meso-DAP), a precursor of L-lysine and an essential component of the bacterial peptidoglycan. This chain is Diaminopimelate epimerase, found in Teredinibacter turnerae (strain ATCC 39867 / T7901).